The sequence spans 363 residues: Dual-specificity RNA methyltransferase RlmN (363 aa).

The active-site Proton acceptor is the Glu-102. Positions Glu-108–Ala-349 constitute a Radical SAM core domain. Cys-115 and Cys-350 are disulfide-bonded. Residues Cys-122, Cys-126, and Cys-129 each coordinate [4Fe-4S] cluster. Residues Gly-174–Glu-175, Ser-206, Ser-228–His-230, and Asn-307 each bind S-adenosyl-L-methionine. Cys-350 acts as the S-methylcysteine intermediate in catalysis.

This sequence belongs to the radical SAM superfamily. RlmN family. The cofactor is [4Fe-4S] cluster.

The protein localises to the cytoplasm. It carries out the reaction adenosine(2503) in 23S rRNA + 2 reduced [2Fe-2S]-[ferredoxin] + 2 S-adenosyl-L-methionine = 2-methyladenosine(2503) in 23S rRNA + 5'-deoxyadenosine + L-methionine + 2 oxidized [2Fe-2S]-[ferredoxin] + S-adenosyl-L-homocysteine. The enzyme catalyses adenosine(37) in tRNA + 2 reduced [2Fe-2S]-[ferredoxin] + 2 S-adenosyl-L-methionine = 2-methyladenosine(37) in tRNA + 5'-deoxyadenosine + L-methionine + 2 oxidized [2Fe-2S]-[ferredoxin] + S-adenosyl-L-homocysteine. Specifically methylates position 2 of adenine 2503 in 23S rRNA and position 2 of adenine 37 in tRNAs. m2A2503 modification seems to play a crucial role in the proofreading step occurring at the peptidyl transferase center and thus would serve to optimize ribosomal fidelity. The protein is Dual-specificity RNA methyltransferase RlmN of Buchnera aphidicola subsp. Schizaphis graminum (strain Sg).